We begin with the raw amino-acid sequence, 1450 residues long: DNA-directed RNA polymerase III subunit rpc1 (1450 aa).

7 residues coordinate Zn(2+): Cys-67, Cys-70, Cys-77, His-80, Cys-107, Cys-110, and Cys-154. Positions 491, 493, and 495 each coordinate Mg(2+). Residues 832–844 (PTEFFFHTMGGRE) are bridging helix.

This sequence belongs to the RNA polymerase beta' chain family. As to quaternary structure, component of the RNA polymerase III (Pol III) complex consisting of 17 subunits.

The protein resides in the nucleus. It catalyses the reaction RNA(n) + a ribonucleoside 5'-triphosphate = RNA(n+1) + diphosphate. DNA-dependent RNA polymerase catalyzes the transcription of DNA into RNA using the four ribonucleoside triphosphates as substrates. Largest and catalytic core component of RNA polymerase III which synthesizes small RNAs, such as 5S rRNA and tRNAs. Forms the polymerase active center together with the second largest subunit. A single-stranded DNA template strand of the promoter is positioned within the central active site cleft of Pol III. A bridging helix emanates from RPC1 and crosses the cleft near the catalytic site and is thought to promote translocation of Pol III by acting as a ratchet that moves the RNA-DNA hybrid through the active site by switching from straight to bent conformations at each step of nucleotide addition. The protein is DNA-directed RNA polymerase III subunit rpc1 (polr3a) of Dictyostelium discoideum (Social amoeba).